We begin with the raw amino-acid sequence, 611 residues long: MPKLRSATSTQGRNMAGARALWRATGMKENDFGKPIIAVVNSFTQFVPGHVHLKDMGQLVAEQIEKAGGVAKEFNTIAVDDGIAMGHGGMLYSLPSRDLIADSVEYMVNAHCADAMVCISNCDKITPGMLMAALRLNIPTIFVSGGPMEAGKTKLSDQIIKLDLVDAMIQGANPNVSDEVSDQIERSACPTCGSCSGMFTANSMNCLTEALGLSLPGNGSCLATHADRKQLFLDAGTQIVELCKKYYEQDDLSVLPRSIATKAAFDNAMSLDIAMGGSTNTVLHLLAAAQEAEVDFTMADIDRLSRQVPCLSKVAPNTQKYHMEDVHRAGGIMAILGELDRAGLLNNQTRTVLGLSLAEQIAKYDIMLTKDEAVHKFFRAGPAGIRTTKAFSQDTRWDTVDDDRQNGCIRSKEFAYSQDGGLAMLSGNIALDGCIVKTAGVDEAILKFKGEAIVFESQEDAVAGILGGKVRAGHVVVIRYEGPKGGPGMQEMLYPTSYLKSMGLGKACALLTDGRFSGGTSGLSIGHCSPEAAAGGLIGLVKDGDTIEIDIPNRKIELVVPEAELAQRRAEQDAKGWKPANREREVSFALKVYGHFATSADKGAVRDKSKI.

A Mg(2+)-binding site is contributed by D81. [2Fe-2S] cluster is bound at residue C122. Positions 123 and 124 each coordinate Mg(2+). Position 124 is an N6-carboxylysine (K124). C195 contributes to the [2Fe-2S] cluster binding site. E491 serves as a coordination point for Mg(2+). S517 serves as the catalytic Proton acceptor.

The protein belongs to the IlvD/Edd family. Homodimer. It depends on [2Fe-2S] cluster as a cofactor. The cofactor is Mg(2+).

It carries out the reaction (2R)-2,3-dihydroxy-3-methylbutanoate = 3-methyl-2-oxobutanoate + H2O. The enzyme catalyses (2R,3R)-2,3-dihydroxy-3-methylpentanoate = (S)-3-methyl-2-oxopentanoate + H2O. The protein operates within amino-acid biosynthesis; L-isoleucine biosynthesis; L-isoleucine from 2-oxobutanoate: step 3/4. It participates in amino-acid biosynthesis; L-valine biosynthesis; L-valine from pyruvate: step 3/4. Functions in the biosynthesis of branched-chain amino acids. Catalyzes the dehydration of (2R,3R)-2,3-dihydroxy-3-methylpentanoate (2,3-dihydroxy-3-methylvalerate) into 2-oxo-3-methylpentanoate (2-oxo-3-methylvalerate) and of (2R)-2,3-dihydroxy-3-methylbutanoate (2,3-dihydroxyisovalerate) into 2-oxo-3-methylbutanoate (2-oxoisovalerate), the penultimate precursor to L-isoleucine and L-valine, respectively. The sequence is that of Dihydroxy-acid dehydratase from Glaesserella parasuis serovar 5 (strain SH0165) (Haemophilus parasuis).